Reading from the N-terminus, the 251-residue chain is Protein CMS1 (251 aa).

The tract at residues Met-1–Leu-37 is disordered.

Belongs to the CMS1 family.

The protein localises to the nucleus. Functionally, may play a role in the regulation of DNA replication and cell cycle control. In Chaetomium thermophilum (strain DSM 1495 / CBS 144.50 / IMI 039719) (Thermochaetoides thermophila), this protein is Protein CMS1 (CSM1).